The sequence spans 231 residues: Large ribosomal subunit protein uL1 (231 aa).

Belongs to the universal ribosomal protein uL1 family. As to quaternary structure, part of the 50S ribosomal subunit.

Functionally, binds directly to 23S rRNA. The L1 stalk is quite mobile in the ribosome, and is involved in E site tRNA release. Its function is as follows. Protein L1 is also a translational repressor protein, it controls the translation of the L11 operon by binding to its mRNA. This chain is Large ribosomal subunit protein uL1, found in Pseudomonas aeruginosa (strain LESB58).